We begin with the raw amino-acid sequence, 632 residues long: 2-oxoacid:ferredoxin oxidoreductase subunit alpha (632 aa).

The short motif at 253–257 (YPITP) is the YPITP motif element. Substrate is bound by residues Thr-256 and Arg-344.

In terms of assembly, heterodimer composed of an alpha and a beta subunit.

It is found in the cytoplasm. The enzyme catalyses a 2-oxocarboxylate + 2 oxidized [2Fe-2S]-[ferredoxin] + CoA = an acyl-CoA + 2 reduced [2Fe-2S]-[ferredoxin] + CO2 + H(+). Functionally, catalyzes the coenzyme A-dependent oxidative decarboxylation of different 2-oxoacids such as 2-oxoglutarate, pyruvate and 2-oxobutyrate to form their CoA derivatives. This is 2-oxoacid:ferredoxin oxidoreductase subunit alpha from Sulfolobus sp.